Reading from the N-terminus, the 769-residue chain is Sensor protein DivL (769 aa).

Residues 6–26 (LILAAAAGAVCLAISVALWSH) form a helical membrane-spanning segment. The Histidine kinase domain occupies 547-758 (NVSYELRTPL…TFTCHLPETQ (212 aa)). Phosphotyrosine; by autocatalysis is present on tyrosine 550.

Autophosphorylated.

Its subcellular location is the cell membrane. It carries out the reaction ATP + protein L-histidine = ADP + protein N-phospho-L-histidine.. Required for cell division and growth. It catalyzes the phosphorylation of CtrA and activates transcription in vitro of the cell cycle-regulated fliF promoter. The polypeptide is Sensor protein DivL (divL) (Caulobacter vibrioides (strain ATCC 19089 / CIP 103742 / CB 15) (Caulobacter crescentus)).